The chain runs to 264 residues: Undecaprenyl-diphosphatase (264 aa).

Helical transmembrane passes span 1–21 (MEIS…FLPI), 39–59 (QGLA…LFYF), 83–103 (SLLV…GLLF), 113–133 (SGVV…FADL), 143–163 (MTIK…IPGV), 184–204 (ANFS…LESI), 220–240 (LGVI…MGII), and 243–263 (IRML…LYLF).

The protein belongs to the UppP family.

It is found in the cell inner membrane. The catalysed reaction is di-trans,octa-cis-undecaprenyl diphosphate + H2O = di-trans,octa-cis-undecaprenyl phosphate + phosphate + H(+). Functionally, catalyzes the dephosphorylation of undecaprenyl diphosphate (UPP). Confers resistance to bacitracin. The polypeptide is Undecaprenyl-diphosphatase (Campylobacter concisus (strain 13826)).